We begin with the raw amino-acid sequence, 229 residues long: Potassium/proton antiporter CemA (229 aa).

Transmembrane regions (helical) follow at residues 7 to 27 (FIPL…SFTF), 107 to 127 (ILHF…SILG), 154 to 174 (ILLL…ELVI), and 189 to 209 (IISG…KYWI).

It belongs to the CemA family.

The protein localises to the plastid. The protein resides in the chloroplast inner membrane. The catalysed reaction is K(+)(in) + H(+)(out) = K(+)(out) + H(+)(in). Its function is as follows. Contributes to K(+)/H(+) antiport activity by supporting proton efflux to control proton extrusion and homeostasis in chloroplasts in a light-dependent manner to modulate photosynthesis. Prevents excessive induction of non-photochemical quenching (NPQ) under continuous-light conditions. Indirectly promotes efficient inorganic carbon uptake into chloroplasts. The chain is Potassium/proton antiporter CemA from Glycine max (Soybean).